Consider the following 232-residue polypeptide: Octanoyltransferase (232 aa).

Positions 44–219 (EHTGDELWVV…QLARQFGLVL (176 aa)) constitute a BPL/LPL catalytic domain. Residues 83-90 (RGGQVTYH), 150-152 (ALG), and 163-165 (GLS) each bind substrate. The active-site Acyl-thioester intermediate is cysteine 181.

It belongs to the LipB family.

It is found in the cytoplasm. The enzyme catalyses octanoyl-[ACP] + L-lysyl-[protein] = N(6)-octanoyl-L-lysyl-[protein] + holo-[ACP] + H(+). It functions in the pathway protein modification; protein lipoylation via endogenous pathway; protein N(6)-(lipoyl)lysine from octanoyl-[acyl-carrier-protein]: step 1/2. Its function is as follows. Catalyzes the transfer of endogenously produced octanoic acid from octanoyl-acyl-carrier-protein onto the lipoyl domains of lipoate-dependent enzymes. Lipoyl-ACP can also act as a substrate although octanoyl-ACP is likely to be the physiological substrate. The polypeptide is Octanoyltransferase (Xanthomonas campestris pv. campestris (strain B100)).